The primary structure comprises 429 residues: Zinc-regulated GTPase metalloprotein activator 1 (429 aa).

Residues 15-22 (GELPCLVT) carry the psi-PxLVp motif motif. 78–85 (GYLGSGKS) is a GTP binding site. The Zn(2+) site is built by Cys136, Cys138, and Cys139. Residues 136–139 (CLCC) carry the CXCC motif motif. GTP is bound by residues 139–143 (CSLKN) and 244–247 (NKYD). Positions 362–428 (RDWEVQRTKG…SIEELLRKTL (67 aa)) constitute a CobW C-terminal domain.

It belongs to the SIMIBI class G3E GTPase family. ZNG1 subfamily.

The catalysed reaction is GTP + H2O = GDP + phosphate + H(+). Its function is as follows. Zinc chaperone that directly transfers zinc cofactor to target metalloproteins, thereby activating them. Catalyzes zinc insertion into the active site of methionine aminopeptidase MAP1, which function to cleave the initiator methionine from polypeptides during or after protein translation. Mechanistically, the N-terminal psi-PxLVp motif binds to the C6H2-type zinc finger of inactive form of MAP1. After formation of the docked complex, zinc is transferred from the CXCC motif in the GTPase domain of ZNG1 to the zinc binding site in the peptidase domain of MAP1 in a process requiring GTP hydrolysis. GTP/GDP exchange is required for release of active MAP1. The sequence is that of Zinc-regulated GTPase metalloprotein activator 1 from Saccharomyces cerevisiae (strain ATCC 204508 / S288c) (Baker's yeast).